The primary structure comprises 380 residues: Chaperone protein DnaJ (380 aa).

The J domain maps to 4 to 68 (DFYSVLGVSR…EKRRMYDQMG (65 aa)). Positions 27–87 (KASEYHPDVS…RGATDTDRGR (61 aa)) are enriched in basic and acidic residues. Residues 27 to 126 (KASEYHPDVS…SRSGPRQGSD (100 aa)) are disordered. Residues 88 to 100 (GGMGGMGGGGMGG) are compositionally biased toward gly residues. Positions 115–124 (SQSRSGPRQG) are enriched in low complexity. The CR-type zinc finger occupies 141 to 223 (GVTKQLTVTR…CRGDGQVRNE (83 aa)). Zn(2+) is bound by residues Cys154, Cys157, Cys171, Cys174, Cys197, Cys200, Cys211, and Cys214. 4 CXXCXGXG motif repeats span residues 154 to 161 (CPDCDGAG), 171 to 178 (CSACDGRG), 197 to 204 (CPQCDGKG), and 211 to 218 (CSTCRGDG).

It belongs to the DnaJ family. As to quaternary structure, homodimer. The cofactor is Zn(2+).

Its subcellular location is the cytoplasm. In terms of biological role, participates actively in the response to hyperosmotic and heat shock by preventing the aggregation of stress-denatured proteins and by disaggregating proteins, also in an autonomous, DnaK-independent fashion. Unfolded proteins bind initially to DnaJ; upon interaction with the DnaJ-bound protein, DnaK hydrolyzes its bound ATP, resulting in the formation of a stable complex. GrpE releases ADP from DnaK; ATP binding to DnaK triggers the release of the substrate protein, thus completing the reaction cycle. Several rounds of ATP-dependent interactions between DnaJ, DnaK and GrpE are required for fully efficient folding. Also involved, together with DnaK and GrpE, in the DNA replication of plasmids through activation of initiation proteins. This Natronomonas pharaonis (strain ATCC 35678 / DSM 2160 / CIP 103997 / JCM 8858 / NBRC 14720 / NCIMB 2260 / Gabara) (Halobacterium pharaonis) protein is Chaperone protein DnaJ.